A 640-amino-acid polypeptide reads, in one-letter code: Threonine--tRNA ligase (640 aa).

The 61-residue stretch at 1 to 61 (MPTITLPDGS…ENDASLQIIT (61 aa)) folds into the TGS domain. Residues 242–533 (DHRKIGKRLG…LIEHYEGAFP (292 aa)) form a catalytic region. 3 residues coordinate Zn(2+): Cys333, His384, and His510.

This sequence belongs to the class-II aminoacyl-tRNA synthetase family. In terms of assembly, homodimer. It depends on Zn(2+) as a cofactor.

Its subcellular location is the cytoplasm. The catalysed reaction is tRNA(Thr) + L-threonine + ATP = L-threonyl-tRNA(Thr) + AMP + diphosphate + H(+). In terms of biological role, catalyzes the attachment of threonine to tRNA(Thr) in a two-step reaction: L-threonine is first activated by ATP to form Thr-AMP and then transferred to the acceptor end of tRNA(Thr). Also edits incorrectly charged L-seryl-tRNA(Thr). This is Threonine--tRNA ligase from Pseudomonas syringae pv. tomato (strain ATCC BAA-871 / DC3000).